A 245-amino-acid polypeptide reads, in one-letter code: 8-amino-3,8-dideoxy-manno-octulosonate cytidylyltransferase (245 aa).

Belongs to the KdsB family.

It localises to the cytoplasm. It carries out the reaction 8-amino-3,8-dideoxy-alpha-D-manno-octulosonate + CTP = CMP-8-amino-3,8-dideoxy-alpha-D-manno-oct-2-ulosonate + diphosphate. It participates in bacterial outer membrane biogenesis; lipopolysaccharide biosynthesis. In terms of biological role, activates KDO8N (a required 8-carbon sugar) for incorporation into bacterial lipopolysaccharide in the Shewanella genus. The protein is 8-amino-3,8-dideoxy-manno-octulosonate cytidylyltransferase of Shewanella sp. (strain MR-7).